The following is a 133-amino-acid chain: Small ribosomal subunit protein uS8 (133 aa).

It belongs to the universal ribosomal protein uS8 family. As to quaternary structure, part of the 30S ribosomal subunit.

Its function is as follows. One of the primary rRNA binding proteins, it binds directly to 16S rRNA central domain where it helps coordinate assembly of the platform of the 30S subunit. In Sulfolobus acidocaldarius (strain ATCC 33909 / DSM 639 / JCM 8929 / NBRC 15157 / NCIMB 11770), this protein is Small ribosomal subunit protein uS8.